Consider the following 520-residue polypeptide: Glucose-6-phosphate isomerase (520 aa).

The Proton donor role is filled by E327. Residues H358 and K486 contribute to the active site.

The protein belongs to the GPI family.

Its subcellular location is the cytoplasm. The catalysed reaction is alpha-D-glucose 6-phosphate = beta-D-fructose 6-phosphate. Its pathway is carbohydrate biosynthesis; gluconeogenesis. It functions in the pathway carbohydrate degradation; glycolysis; D-glyceraldehyde 3-phosphate and glycerone phosphate from D-glucose: step 2/4. Functionally, catalyzes the reversible isomerization of glucose-6-phosphate to fructose-6-phosphate. The chain is Glucose-6-phosphate isomerase from Bordetella avium (strain 197N).